Reading from the N-terminus, the 415-residue chain is Lipoyl synthase, mitochondrial (415 aa).

The N-terminal 32 residues, 1-32 (MAVSTSHFRSLCASSRSLSRTGIVAPISCRGY), are a transit peptide targeting the mitochondrion. The tract at residues 30–50 (RGYATTEPSPSATSTTTTTTA) is disordered. A compositionally biased stretch (low complexity) spans 33–49 (ATTEPSPSATSTTTTTT). Positions 132, 137, 143, 163, 167, 170, and 378 each coordinate [4Fe-4S] cluster. One can recognise a Radical SAM core domain in the interval 146-367 (GSDKSAATAT…RQRALDMGFL (222 aa)).

It belongs to the radical SAM superfamily. Lipoyl synthase family. [4Fe-4S] cluster serves as cofactor.

It localises to the mitochondrion. It carries out the reaction [[Fe-S] cluster scaffold protein carrying a second [4Fe-4S](2+) cluster] + N(6)-octanoyl-L-lysyl-[protein] + 2 oxidized [2Fe-2S]-[ferredoxin] + 2 S-adenosyl-L-methionine + 4 H(+) = [[Fe-S] cluster scaffold protein] + N(6)-[(R)-dihydrolipoyl]-L-lysyl-[protein] + 4 Fe(3+) + 2 hydrogen sulfide + 2 5'-deoxyadenosine + 2 L-methionine + 2 reduced [2Fe-2S]-[ferredoxin]. The protein operates within protein modification; protein lipoylation via endogenous pathway; protein N(6)-(lipoyl)lysine from octanoyl-[acyl-carrier-protein]: step 2/2. In terms of biological role, catalyzes the radical-mediated insertion of two sulfur atoms into the C-6 and C-8 positions of the octanoyl moiety bound to the lipoyl domains of lipoate-dependent enzymes, thereby converting the octanoylated domains into lipoylated derivatives. In Neosartorya fischeri (strain ATCC 1020 / DSM 3700 / CBS 544.65 / FGSC A1164 / JCM 1740 / NRRL 181 / WB 181) (Aspergillus fischerianus), this protein is Lipoyl synthase, mitochondrial.